Consider the following 155-residue polypeptide: Perlucin (155 aa).

Intrachain disulfides connect Cys-2/Cys-13, Cys-30/Cys-127, and Cys-102/Cys-119. Positions 9-128 constitute a C-type lectin domain; the sequence is NRRSCYWFST…CQKPSHFICE (120 aa). N-linked (GlcNAc...) asparagine glycosylation is present at Asn-84. Repeat copies occupy residues 136–145 and 146–155.

In terms of processing, glycosylated.

May promote nucleation and/or growth of calcium carbonate crystals. Binds to D-galactose and D-mannose/D-glucose. This chain is Perlucin, found in Haliotis laevigata (Smooth Australian abalone).